A 669-amino-acid chain; its full sequence is PAN2-PAN3 deadenylation complex subunit PAN3 (669 aa).

Over residues 1–10 (MATTFGSPSG) the composition is skewed to polar residues. The tract at residues 1–25 (MATTFGSPSGDSRRGVASPRPKGRE) is disordered. Residues 25–54 (EAKNTFCRNVTIYGHCRYENSKCRPPHLPD) form a C3H1-type zinc finger. Residues 247–519 (QVMPNSTLPV…DIDNFLGGIS (273 aa)) form a pseudokinase domain region. Residues Arg-298, 347-354 (DYHPNSKS), and 408-409 (SK) contribute to the ATP site. Residues 520-558 (DQLASVFDSELHAQDTLTNTLGRELESSRIVRLLVKLNM) are a coiled coil. A knob domain region spans residues 559–669 (VNERPELDAS…LIRAGRGQGK (111 aa)).

Belongs to the protein kinase superfamily. PAN3 family. Homodimer. Forms a heterotrimer with a catalytic subunit PAN2 to form the poly(A)-nuclease (PAN) deadenylation complex. Interacts (via PAM-2 motif) with poly(A)-binding protein PAB1 (via PABC domain), conferring substrate specificity of the enzyme complex.

It is found in the cytoplasm. Its function is as follows. Regulatory subunit of the poly(A)-nuclease (PAN) deadenylation complex, one of two cytoplasmic mRNA deadenylases involved in mRNA turnover. PAN specifically shortens poly(A) tails of RNA and the activity is stimulated by poly(A)-binding protein PAB1. PAN deadenylation is followed by rapid degradation of the shortened mRNA tails by the CCR4-NOT complex. Deadenylated mRNAs are then degraded by two alternative mechanisms, namely exosome-mediated 3'-5' exonucleolytic degradation, or deadenylation-dependent mRNA decaping and subsequent 5'-3' exonucleolytic degradation by XRN1. May also be involved in post-transcriptional maturation of mRNA poly(A) tails. PAN3 acts as a positive regulator for PAN activity, recruiting the catalytic subunit PAN2 to mRNA via its interaction with RNA and with PAB1. This Phaeosphaeria nodorum (strain SN15 / ATCC MYA-4574 / FGSC 10173) (Glume blotch fungus) protein is PAN2-PAN3 deadenylation complex subunit PAN3.